An 83-amino-acid chain; its full sequence is Exodeoxyribonuclease 7 small subunit (83 aa).

It belongs to the XseB family. In terms of assembly, heterooligomer composed of large and small subunits.

It localises to the cytoplasm. The enzyme catalyses Exonucleolytic cleavage in either 5'- to 3'- or 3'- to 5'-direction to yield nucleoside 5'-phosphates.. Bidirectionally degrades single-stranded DNA into large acid-insoluble oligonucleotides, which are then degraded further into small acid-soluble oligonucleotides. In Bradyrhizobium sp. (strain ORS 278), this protein is Exodeoxyribonuclease 7 small subunit.